The primary structure comprises 390 residues: Glutamyl-tRNA reductase (390 aa).

Residues 46-49 (TCNR), serine 96, 101-103 (EAQ), and glutamine 107 contribute to the substrate site. The Nucleophile role is filled by cysteine 47. 176 to 181 (GAGEMA) is a binding site for NADP(+).

This sequence belongs to the glutamyl-tRNA reductase family. Homodimer.

The enzyme catalyses (S)-4-amino-5-oxopentanoate + tRNA(Glu) + NADP(+) = L-glutamyl-tRNA(Glu) + NADPH + H(+). It participates in porphyrin-containing compound metabolism; protoporphyrin-IX biosynthesis; 5-aminolevulinate from L-glutamyl-tRNA(Glu): step 1/2. Catalyzes the NADPH-dependent reduction of glutamyl-tRNA(Glu) to glutamate 1-semialdehyde (GSA). This chain is Glutamyl-tRNA reductase, found in Thermus thermophilus (strain ATCC 27634 / DSM 579 / HB8).